A 354-amino-acid chain; its full sequence is Guanine nucleotide-binding protein G(o) subunit alpha (354 aa).

Residue Gly-2 is the site of N-myristoyl glycine attachment. Residue Cys-3 is the site of S-palmitoyl cysteine attachment. Residues 32–354 (KDVKLLLLGA…ANNLRGCGLY (323 aa)) form the G-alpha domain. The tract at residues 35–48 (KLLLLGAGESGKST) is G1 motif. Residues Glu-43, Lys-46, Ser-47, Thr-48, Ser-152, Leu-176, Arg-177, Thr-178, and Arg-179 each coordinate GTP. Mg(2+) is bound at residue Ser-47. A G2 motif region spans residues 174-182 (DILRTRVKT). Arg-179 is subject to ADP-ribosylarginine; by cholera toxin. Thr-182 contacts Mg(2+). Positions 197–206 (FRLFDVGGQR) are G3 motif. Gln-205 carries the 5-glutamyl histamine modification. Residues 266-273 (ILFLNKKD) form a G4 motif region. GTP contacts are provided by Asn-270, Asp-273, and Cys-325. The interval 324–329 (TCATDT) is G5 motif. Cys-351 carries S-palmitoyl cysteine lipidation. ADP-ribosylcysteine; by pertussis toxin is present on Cys-351.

This sequence belongs to the G-alpha family. G(i/o/t/z) subfamily. In terms of assembly, g proteins are composed of 3 units; alpha, beta and gamma. The alpha chain contains the guanine nucleotide binding site. Forms a complex with GNB1 and GNG3. Interacts with RGS14. Interacts with RGS16. Interacts with RGS19. Interacts (when palmitoylated) with ADGRG3. Histaminylated at Gln-205 residues by TGM2. In terms of processing, palmitoylated at Cys-351, leading to binding to ADGRG3.

The protein localises to the cell membrane. Its subcellular location is the membrane. It carries out the reaction GTP + H2O = GDP + phosphate + H(+). With respect to regulation, the GTPase activity is promoted by GTPAse activators, such as RGS14, RGS16 and RGS19. In terms of biological role, guanine nucleotide-binding proteins (G proteins) function as transducers downstream of G protein-coupled receptors (GPCRs) in numerous signaling cascades. The alpha chain contains the guanine nucleotide binding site and alternates between an active, GTP-bound state and an inactive, GDP-bound state. Signaling by an activated GPCR promotes GDP release and GTP binding. The alpha subunit has a low GTPase activity that converts bound GTP to GDP, thereby terminating the signal. Both GDP release and GTP hydrolysis are modulated by numerous regulatory proteins. Signaling is mediated via effector proteins, such as adenylate cyclase. Inhibits adenylate cyclase activity, leading to decreased intracellular cAMP levels. In Homo sapiens (Human), this protein is Guanine nucleotide-binding protein G(o) subunit alpha (GNAO1).